Reading from the N-terminus, the 632-residue chain is MTGWSGLFIEVPLYRLASKVCCHLRGPQGFLQRACQGVCCLPRDSRAAGIMEEKRKSFISQILILGEVLCMVDVSMSIKCGILFLLFGGAISNLGSPEHVTKWFWPLKEQKYTGMFAMTERGHGSNVRGIQTEATFDLDNQEFVIDMPCENAHKMYIGNAMHGNYAAVFAQLIIEGKSQGPHCFIVPIRDENGNLYPGVTAIDMMHKEGMNGVDNGILIFDKVRIPRENLLDKFGSVTPDGQYHSPIQSKNARFNAILATLTPSRLAVTFQALGAMKLGLMIAIRYSHSRRQFGPKDKEEVKIIEHQMQALRLMSHLATALAVTFTSRHADDILDEDIFQGRALTNSRSLQALMAGLKAYSTWETVSCLQDCRECTGGMGYMMETRISDLKCDTDVFVTFEGDNVVMLQVVARELLAQYSKQHKKNLLLGVIQNWTATAGDKLRTSFLAFNTDTVGCLAFLLKAVNFRERVLQRSLVSRIYYKVVTKKGDFFSAWNSCMHHVTSLSLAHIHRVALEQFTTAVRQCPNREDQALLMKFCLLYGTKLVFQERGWYLEHKYLTPKASMLIRAQLLNLCESVKDDALKVISAFNIPHITIRAPKTGIPNPGAAEAAYPAPMQPLVRDAARAQLAKL.

Residue 376–381 (TGGMGY) coordinates FAD.

It belongs to the acyl-CoA oxidase family. The cofactor is FAD.

This is Acyl-coenzyme A oxidase-like protein (Acoxl) from Mus musculus (Mouse).